A 294-amino-acid chain; its full sequence is 33 kDa chaperonin (294 aa).

2 disulfides stabilise this stretch: Cys238-Cys240 and Cys271-Cys274.

It belongs to the HSP33 family. Under oxidizing conditions two disulfide bonds are formed involving the reactive cysteines. Under reducing conditions zinc is bound to the reactive cysteines and the protein is inactive.

It is found in the cytoplasm. Functionally, redox regulated molecular chaperone. Protects both thermally unfolding and oxidatively damaged proteins from irreversible aggregation. Plays an important role in the bacterial defense system toward oxidative stress. This chain is 33 kDa chaperonin, found in Caldanaerobacter subterraneus subsp. tengcongensis (strain DSM 15242 / JCM 11007 / NBRC 100824 / MB4) (Thermoanaerobacter tengcongensis).